The following is a 1338-amino-acid chain: Phosphoribosylformylglycinamidine synthase (1338 aa).

At Ser-215 the chain carries Phosphoserine. ATP-binding positions include Gly-322–Asp-333 and Ala-402–Phe-404. Ser-569 is subject to Phosphoserine. Phosphothreonine occurs at positions 619 and 623. Ala-706 contributes to the ATP binding site. Asp-707, Glu-746, Asn-750, and Asp-909 together coordinate Mg(2+). Ser-911 serves as a coordination point for ATP. One can recognise a Glutamine amidotransferase type-1 domain in the interval Arg-1064–Val-1302. Cys-1158 (nucleophile) is an active-site residue. Active-site residues include His-1297 and Glu-1299.

This sequence in the N-terminal section; belongs to the FGAMS family.

It localises to the cytoplasm. It catalyses the reaction N(2)-formyl-N(1)-(5-phospho-beta-D-ribosyl)glycinamide + L-glutamine + ATP + H2O = 2-formamido-N(1)-(5-O-phospho-beta-D-ribosyl)acetamidine + L-glutamate + ADP + phosphate + H(+). It functions in the pathway purine metabolism; IMP biosynthesis via de novo pathway; 5-amino-1-(5-phospho-D-ribosyl)imidazole from N(2)-formyl-N(1)-(5-phospho-D-ribosyl)glycinamide: step 1/2. Functionally, phosphoribosylformylglycinamidine synthase involved in the purines biosynthetic pathway. Catalyzes the ATP-dependent conversion of formylglycinamide ribonucleotide (FGAR) and glutamine to yield formylglycinamidine ribonucleotide (FGAM) and glutamate. The protein is Phosphoribosylformylglycinamidine synthase (PFAS) of Homo sapiens (Human).